A 407-amino-acid polypeptide reads, in one-letter code: [Pyruvate dehydrogenase (acetyl-transferring)] kinase isozyme 2, mitochondrial (407 aa).

The 230-residue stretch at 135–364 folds into the Histidine kinase domain; the sequence is LEYKDTYGDD…DAVIYLKALS (230 aa). Residues Tyr-215 and Tyr-216 each carry the phosphotyrosine modification. ATP is bound by residues 251 to 258, Asp-290, 309 to 310, and 325 to 330; these read ELFKNAMR, ST, and GFGYGL. Lys-376 bears the N6-succinyllysine mark.

This sequence belongs to the PDK/BCKDK protein kinase family. As to quaternary structure, homodimer, and heterodimer with PDK1. Interacts with the pyruvate dehydrogenase complex subunit DLAT, and is part of the multimeric pyruvate dehydrogenase complex that contains multiple copies of pyruvate dehydrogenase (E1), dihydrolipoamide acetyltransferase (DLAT, E2) and lipoamide dehydrogenase (DLD, E3). In terms of tissue distribution, expressed in many tissues, with the highest level in heart and skeletal muscle, intermediate levels in brain, kidney, pancreas and liver, and low levels in placenta and lung.

The protein localises to the mitochondrion matrix. It carries out the reaction L-seryl-[pyruvate dehydrogenase E1 alpha subunit] + ATP = O-phospho-L-seryl-[pyruvate dehydrogenase E1 alpha subunit] + ADP + H(+). Its activity is regulated as follows. Activity is enhanced by binding to the pyruvate dehydrogenase subunit DLAT. Inhibited by ADP and pyruvate; these compounds interfere with DLAT binding and thereby inhibit kinase activity. Inhibited by dichloroacetate. Inhibited by AZD7545; this compound interferes with DLAT binding and thereby inhibits kinase activity. Functionally, kinase that plays a key role in the regulation of glucose and fatty acid metabolism and homeostasis via phosphorylation of the pyruvate dehydrogenase subunits PDHA1 and PDHA2. This inhibits pyruvate dehydrogenase activity, and thereby regulates metabolite flux through the tricarboxylic acid cycle, down-regulates aerobic respiration and inhibits the formation of acetyl-coenzyme A from pyruvate. Inhibition of pyruvate dehydrogenase decreases glucose utilization and increases fat metabolism. Mediates cellular responses to insulin. Plays an important role in maintaining normal blood glucose levels and in metabolic adaptation to nutrient availability. Via its regulation of pyruvate dehydrogenase activity, plays an important role in maintaining normal blood pH and in preventing the accumulation of ketone bodies under starvation. Plays a role in the regulation of cell proliferation and in resistance to apoptosis under oxidative stress. Plays a role in p53/TP53-mediated apoptosis. The polypeptide is [Pyruvate dehydrogenase (acetyl-transferring)] kinase isozyme 2, mitochondrial (PDK2) (Homo sapiens (Human)).